We begin with the raw amino-acid sequence, 585 residues long: Pyruvate kinase (585 aa).

R32 contributes to the substrate binding site. K(+)-binding residues include N34, S36, D66, and T67. ATP is bound at residue 34-37; that stretch reads NFSH. 2 residues coordinate ATP: R73 and K156. Residue E221 participates in Mg(2+) binding. Residues G244, D245, and T277 each coordinate substrate. D245 is a Mg(2+) binding site.

Belongs to the pyruvate kinase family. It in the C-terminal section; belongs to the PEP-utilizing enzyme family. It depends on Mg(2+) as a cofactor. Requires K(+) as cofactor.

The enzyme catalyses pyruvate + ATP = phosphoenolpyruvate + ADP + H(+). Its pathway is carbohydrate degradation; glycolysis; pyruvate from D-glyceraldehyde 3-phosphate: step 5/5. The chain is Pyruvate kinase (pyk) from Staphylococcus aureus (strain MRSA252).